We begin with the raw amino-acid sequence, 361 residues long: tRNA-specific 2-thiouridylase MnmA (361 aa).

ATP is bound by residues 10 to 17 and Met-36; that span reads GMSGGVDS. The active-site Nucleophile is Cys-104. An intrachain disulfide couples Cys-104 to Cys-202. Position 128 (Gly-128) interacts with ATP. Positions 152–154 are interaction with tRNA; it reads KDQ. Residue Cys-202 is the Cysteine persulfide intermediate of the active site. Residues 308-309 are interaction with tRNA; sequence RY.

This sequence belongs to the MnmA/TRMU family.

Its subcellular location is the cytoplasm. It catalyses the reaction S-sulfanyl-L-cysteinyl-[protein] + uridine(34) in tRNA + AH2 + ATP = 2-thiouridine(34) in tRNA + L-cysteinyl-[protein] + A + AMP + diphosphate + H(+). Catalyzes the 2-thiolation of uridine at the wobble position (U34) of tRNA, leading to the formation of s(2)U34. This chain is tRNA-specific 2-thiouridylase MnmA, found in Clostridioides difficile (strain 630) (Peptoclostridium difficile).